Here is a 466-residue protein sequence, read N- to C-terminus: Ribulose bisphosphate carboxylase (466 aa).

Position 111 (N111) interacts with substrate. The active-site Proton acceptor is K166. K168 is a binding site for substrate. K191, D193, and E194 together coordinate Mg(2+). K191 is subject to N6-carboxylysine. H287 (proton acceptor) is an active-site residue. Substrate-binding residues include R288, H321, and S368.

This sequence belongs to the RuBisCO large chain family. Type II subfamily. Homodimer. Mg(2+) serves as cofactor.

The catalysed reaction is 2 (2R)-3-phosphoglycerate + 2 H(+) = D-ribulose 1,5-bisphosphate + CO2 + H2O. It carries out the reaction D-ribulose 1,5-bisphosphate + O2 = 2-phosphoglycolate + (2R)-3-phosphoglycerate + 2 H(+). Functionally, ruBisCO catalyzes two reactions: the carboxylation of D-ribulose 1,5-bisphosphate, the primary event in carbon dioxide fixation, as well as the oxidative fragmentation of the pentose substrate. Both reactions occur simultaneously and in competition at the same active site. The chain is Ribulose bisphosphate carboxylase (cbbM) from Rhodospirillum rubrum.